A 351-amino-acid polypeptide reads, in one-letter code: ATP-dependent protease ATP-binding subunit-like protein (351 aa).

Positions 1–26 (MPYITDMLRDRNSAATPPAEERSEPV) are disordered. An ATP-binding site is contributed by 79–86 (GPTGVGKT).

It belongs to the ClpA/ClpB family.

This Rhodococcus erythropolis (Arthrobacter picolinophilus) protein is ATP-dependent protease ATP-binding subunit-like protein.